Here is a 164-residue protein sequence, read N- to C-terminus: MRLILAAVGRLKAGPERELASRYRDRAAQLGRGLGFPSCDNVEIPESRARRAPDRCAEEAAALATYLPSGGVLVAYDERGRADLGSEALAERVAGWRDAARPALVVTIGGPDGLDASIRTRAELILSFGAATLPHGLVRVLALEQLYRSLTILAGHPYHRGEAG.

Residue G109 coordinates S-adenosyl-L-methionine.

It belongs to the RNA methyltransferase RlmH family. As to quaternary structure, homodimer.

It is found in the cytoplasm. The enzyme catalyses pseudouridine(1915) in 23S rRNA + S-adenosyl-L-methionine = N(3)-methylpseudouridine(1915) in 23S rRNA + S-adenosyl-L-homocysteine + H(+). Its function is as follows. Specifically methylates the pseudouridine at position 1915 (m3Psi1915) in 23S rRNA. In Methylobacterium radiotolerans (strain ATCC 27329 / DSM 1819 / JCM 2831 / NBRC 15690 / NCIMB 10815 / 0-1), this protein is Ribosomal RNA large subunit methyltransferase H.